We begin with the raw amino-acid sequence, 608 residues long: Phosphatidylinositol/phosphatidylcholine transfer protein SFH4 (608 aa).

Positions 1–33 (MSGPLDRFTSPCFSNNGEKREKKSDFEVSEDEK) are disordered. The segment covering 17–33 (GEKREKKSDFEVSEDEK) has biased composition (basic and acidic residues). A CRAL-TRIO domain is found at 146–320 (ELDEVLRYYP…FFGGTCTCAD (175 aa)). Positions 358 to 403 (DSQISSSDKPTYSLKVSDTSTAKSGSELEEMASPKTNTNNHVPKLT) are disordered. Over residues 371-381 (LKVSDTSTAKS) the composition is skewed to polar residues. Residues 526 to 572 (ISSVLSRLGDLEKQIENLHSRKSEMPHEKEELLNAAVYRVDALEAEL) are a coiled coil.

The protein belongs to the SFH family.

The protein localises to the golgi apparatus membrane. It is found in the cell membrane. In terms of biological role, required for transport of secretory proteins from the Golgi complex. Catalyzes the transfer of phosphatidylinositol and phosphatidylcholine between membranes in vitro. The polypeptide is Phosphatidylinositol/phosphatidylcholine transfer protein SFH4 (SFH4) (Arabidopsis thaliana (Mouse-ear cress)).